The primary structure comprises 120 residues: Chaperonin GroEL (120 aa).

ATP is bound at residue 23–27 (DGTTT).

Belongs to the chaperonin (HSP60) family. Forms a cylinder of 14 subunits composed of two heptameric rings stacked back-to-back. Interacts with the co-chaperonin GroES.

The protein localises to the cytoplasm. It catalyses the reaction ATP + H2O + a folded polypeptide = ADP + phosphate + an unfolded polypeptide.. Together with its co-chaperonin GroES, plays an essential role in assisting protein folding. The GroEL-GroES system forms a nano-cage that allows encapsulation of the non-native substrate proteins and provides a physical environment optimized to promote and accelerate protein folding. The polypeptide is Chaperonin GroEL (Mycobacterium malmoense).